A 258-amino-acid chain; its full sequence is Thrombin-like enzyme ancrod-2 (258 aa).

An N-terminal signal peptide occupies residues 1 to 18 (MVLIRVLANLVILQLSYA). Positions 19–24 (QKSSEL) are excised as a propeptide. The Peptidase S1 domain occupies 25 to 251 (VIGGDECNIN…HLHWILSIMA (227 aa)). 6 disulfides stabilise this stretch: cysteine 31–cysteine 165, cysteine 52–cysteine 68, cysteine 102–cysteine 256, cysteine 144–cysteine 212, cysteine 176–cysteine 191, and cysteine 202–cysteine 227. Catalysis depends on charge relay system residues histidine 67 and aspartate 112. Asparagine 123 and asparagine 172 each carry an N-linked (GlcNAc...) asparagine glycan. Serine 206 serves as the catalytic Charge relay system. Residue asparagine 253 is glycosylated (N-linked (GlcNAc...) asparagine).

The protein belongs to the peptidase S1 family. Snake venom subfamily. Monomer. Expressed by the venom gland.

The protein resides in the secreted. The enzyme catalyses Selective cleavage of Arg-|-Xaa bond in fibrinogen, to form fibrin, and release fibrinopeptide A. The specificity of further degradation of fibrinogen varies with species origin of the enzyme.. Functionally, thrombin-like snake venom serine protease. Cleaves fibrinogen (FGA) to split of fibrinopeptides AM, AO, and AY; the aberrant fibrinogen is then incapable of being cross-linked, forming easily dispersible clots. This chain is Thrombin-like enzyme ancrod-2, found in Calloselasma rhodostoma (Malayan pit viper).